Reading from the N-terminus, the 421-residue chain is Serine hydroxymethyltransferase (421 aa).

(6S)-5,6,7,8-tetrahydrofolate-binding positions include leucine 121 and 125–127 (GHL). Lysine 230 is subject to N6-(pyridoxal phosphate)lysine. A (6S)-5,6,7,8-tetrahydrofolate-binding site is contributed by 355 to 357 (SPF).

Belongs to the SHMT family. In terms of assembly, homodimer. Requires pyridoxal 5'-phosphate as cofactor.

It localises to the cytoplasm. The catalysed reaction is (6R)-5,10-methylene-5,6,7,8-tetrahydrofolate + glycine + H2O = (6S)-5,6,7,8-tetrahydrofolate + L-serine. The protein operates within one-carbon metabolism; tetrahydrofolate interconversion. It functions in the pathway amino-acid biosynthesis; glycine biosynthesis; glycine from L-serine: step 1/1. Functionally, catalyzes the reversible interconversion of serine and glycine with tetrahydrofolate (THF) serving as the one-carbon carrier. This reaction serves as the major source of one-carbon groups required for the biosynthesis of purines, thymidylate, methionine, and other important biomolecules. Also exhibits THF-independent aldolase activity toward beta-hydroxyamino acids, producing glycine and aldehydes, via a retro-aldol mechanism. The protein is Serine hydroxymethyltransferase of Cellvibrio japonicus (strain Ueda107) (Pseudomonas fluorescens subsp. cellulosa).